The primary structure comprises 122 residues: Protein TCL1B3 (122 aa).

The protein belongs to the TCL1 family.

This is Protein TCL1B3 (Tcl1b3) from Mus musculus (Mouse).